Reading from the N-terminus, the 284-residue chain is Pantothenate synthetase (284 aa).

30-37 (MGNLHDGH) serves as a coordination point for ATP. His-37 (proton donor) is an active-site residue. A (R)-pantoate-binding site is contributed by Gln-61. Gln-61 serves as a coordination point for beta-alanine. Residue 149-152 (GEKD) coordinates ATP. Residue Gln-155 participates in (R)-pantoate binding. Residues Ile-178 and 186–189 (LSSR) contribute to the ATP site.

The protein belongs to the pantothenate synthetase family. Homodimer.

It is found in the cytoplasm. The enzyme catalyses (R)-pantoate + beta-alanine + ATP = (R)-pantothenate + AMP + diphosphate + H(+). Its pathway is cofactor biosynthesis; (R)-pantothenate biosynthesis; (R)-pantothenate from (R)-pantoate and beta-alanine: step 1/1. Its function is as follows. Catalyzes the condensation of pantoate with beta-alanine in an ATP-dependent reaction via a pantoyl-adenylate intermediate. The chain is Pantothenate synthetase from Salmonella heidelberg (strain SL476).